Consider the following 128-residue polypeptide: Keratin-associated protein 21-1 (128 aa).

The interval 11 to 117 (GGCGYGSRYG…RYGCGYGSGC (107 aa)) is 51 X 2 AA repeats of G-[YCGS].

It belongs to the KRTAP type 21 family. As to quaternary structure, interacts with hair keratins. As to expression, strong expression in narrowly defined pattern restricted to the lower and middle cortical regions of the hair shaft in both developing and cycling hair. During hair follicle regression (catagen), expression levels decrease until expression is no longer detectable in follicles at resting stage (telogen).

Its function is as follows. In the hair cortex, hair keratin intermediate filaments are embedded in an interfilamentous matrix, consisting of hair keratin-associated proteins (KRTAP), which are essential for the formation of a rigid and resistant hair shaft through their extensive disulfide bond cross-linking with abundant cysteine residues of hair keratins. The matrix proteins include the high-sulfur and high-glycine-tyrosine keratins. The protein is Keratin-associated protein 21-1 (Krtap21-1) of Mus musculus (Mouse).